Here is a 149-residue protein sequence, read N- to C-terminus: D-aminoacyl-tRNA deacylase (149 aa).

Positions 137-138 (GP) match the Gly-cisPro motif, important for rejection of L-amino acids motif.

This sequence belongs to the DTD family. In terms of assembly, homodimer.

It localises to the cytoplasm. The enzyme catalyses glycyl-tRNA(Ala) + H2O = tRNA(Ala) + glycine + H(+). The catalysed reaction is a D-aminoacyl-tRNA + H2O = a tRNA + a D-alpha-amino acid + H(+). Its function is as follows. An aminoacyl-tRNA editing enzyme that deacylates mischarged D-aminoacyl-tRNAs. Also deacylates mischarged glycyl-tRNA(Ala), protecting cells against glycine mischarging by AlaRS. Acts via tRNA-based rather than protein-based catalysis; rejects L-amino acids rather than detecting D-amino acids in the active site. By recycling D-aminoacyl-tRNA to D-amino acids and free tRNA molecules, this enzyme counteracts the toxicity associated with the formation of D-aminoacyl-tRNA entities in vivo and helps enforce protein L-homochirality. The sequence is that of D-aminoacyl-tRNA deacylase from Koribacter versatilis (strain Ellin345).